The following is a 240-amino-acid chain: Pathogenesis-related thaumatin-like protein 3.5 (240 aa).

The first 20 residues, 1 to 20 (MASLRLATLAMMVLFGSCRA), serve as a signal peptide directing secretion. Disulfide bonds link Cys31–Cys237, Cys79–Cys89, Cys94–Cys100, Cys145–Cys227, Cys150–Cys210, Cys158–Cys173, Cys177–Cys186, and Cys187–Cys197.

It belongs to the thaumatin family. Strongly expressed in pollen grains. Also present at weak levels in seedling roots, in sapling stems and in developing male strobili.

In terms of biological role, may be involved in disease resistance. This Cryptomeria japonica (Japanese cedar) protein is Pathogenesis-related thaumatin-like protein 3.5.